We begin with the raw amino-acid sequence, 130 residues long: Large ribosomal subunit protein bL12 (130 aa).

This sequence belongs to the bacterial ribosomal protein bL12 family. Homodimer. Part of the ribosomal stalk of the 50S ribosomal subunit. Forms a multimeric L10(L12)X complex, where L10 forms an elongated spine to which 2 to 4 L12 dimers bind in a sequential fashion. Binds GTP-bound translation factors.

Forms part of the ribosomal stalk which helps the ribosome interact with GTP-bound translation factors. Is thus essential for accurate translation. The sequence is that of Large ribosomal subunit protein bL12 from Mycobacterium bovis (strain ATCC BAA-935 / AF2122/97).